Here is a 395-residue protein sequence, read N- to C-terminus: Sensor protein DltS (395 aa).

2 consecutive transmembrane segments (helical) span residues 9 to 29 (FVFL…AVSN) and 136 to 156 (FLIL…SLYL). Positions 177 to 387 (DASHELKTPI…RLEVQLPIDG (211 aa)) constitute a Histidine kinase domain. H180 carries the post-translational modification Phosphohistidine; by autocatalysis.

Its subcellular location is the cell membrane. The catalysed reaction is ATP + protein L-histidine = ADP + protein N-phospho-L-histidine.. In terms of biological role, member of the two-component regulatory system DltS/DltR. Regulates the expression of the dlt operon. Probably phosphorylates DltR. This Streptococcus agalactiae serotype V (strain ATCC BAA-611 / 2603 V/R) protein is Sensor protein DltS (dltS).